Consider the following 880-residue polypeptide: Interference hedgehog (880 aa).

A signal peptide spans 1-20; the sequence is MTLLTSSLLLFSLLTSRLEA. At 21 to 703 the chain is on the extracellular side; it reads IPVLEKSPAH…ETFNMSPMLT (683 aa). 4 Ig-like C2-type domains span residues 45-142, 155-232, 252-340, and 346-432; these read PGVR…TARL, PESP…ERIQ, PHLL…YIKV, and PQIV…LQVN. 4 cysteine pairs are disulfide-bonded: C68–C126, C173–C220, C276–C324, and C367–C414. N-linked (GlcNAc...) asparagine glycosylation is found at N102 and N209. The tract at residues 429–467 is disordered; sequence LQVNPKQIQEPRESGGTHRPNPNQGSKHKQMYPPTPPNV. Fibronectin type-III domains lie at 461 to 567 and 575 to 670; these read PPTP…LQPG and VPEL…TQRP. The N-linked (GlcNAc...) asparagine glycan is linked to N466. 4 residues coordinate heparin: R497, K501, K503, and R541. Residue N557 is glycosylated (N-linked (GlcNAc...) asparagine). A disordered region spans residues 662-692; that stretch reads LKQGRTQRPKTSTTEEPTLQMGDRDTTTPSH. A compositionally biased stretch (polar residues) spans 665–678; that stretch reads GRTQRPKTSTTEEP. N-linked (GlcNAc...) asparagine glycosylation is present at N693. A helical membrane pass occupies residues 704 to 724; the sequence is GTIGGGAVLILLLISTCLCVC. Residues 725 to 880 lie on the Cytoplasmic side of the membrane; sequence RRRNSRSRGN…SSGSLNSVGV (156 aa). Disordered regions lie at residues 728–762 and 775–880; these read NSRS…QRQR and QQQQ…SVGV. Low complexity-rich tracts occupy residues 823–837 and 864–880; these read RAGG…NNNN and SSRS…SVGV.

The protein belongs to the immunoglobulin superfamily. IHOG family. As to quaternary structure, homodimer. Heterotetramer; 2 iHog chains bind 2 hh chains when facilitated by heparin, heparin is required to promote high-affinity interactions between hh and iHog.

The protein resides in the membrane. Functionally, mediates response to the active Hedgehog (Hh) protein signal in embryos, functioning upstream or at the level of patched (ptc). The sequence is that of Interference hedgehog from Drosophila simulans (Fruit fly).